A 306-amino-acid chain; its full sequence is MVLLQTIAHAKINIGLMIPYKREDGLHEIRSVFVPIDFGDPMEIQIKSLPKGIVSRFVFHSTNHLQGYRHSLFEAVSERGDLSQNILTKTFHKLKPYFQEALEIKVQIQKHLPPEGGIGGGSSNAGVLLQHLFPYTNLSRGEQIQFAKSIGADVPFFLQSSACFVTGIGEVMEPIRLAKGFGILAIPPFGLSTGSMYASLQKSLQKPYGSEVWKSLTEDLIRSLHVGDWVYLQNRLENEFEKIAFQTQPLLKELKLGFFESGAIFASLSGSGSCLYGIYPTEEKRNEALPNVSLRFPKMEFRTFSF.

Residue Lys-11 is part of the active site. 113–123 (PPEGGIGGGSS) is an ATP binding site. Asp-153 is a catalytic residue.

It belongs to the GHMP kinase family. IspE subfamily.

The enzyme catalyses 4-CDP-2-C-methyl-D-erythritol + ATP = 4-CDP-2-C-methyl-D-erythritol 2-phosphate + ADP + H(+). Its pathway is isoprenoid biosynthesis; isopentenyl diphosphate biosynthesis via DXP pathway; isopentenyl diphosphate from 1-deoxy-D-xylulose 5-phosphate: step 3/6. Catalyzes the phosphorylation of the position 2 hydroxy group of 4-diphosphocytidyl-2C-methyl-D-erythritol. This Leptospira biflexa serovar Patoc (strain Patoc 1 / ATCC 23582 / Paris) protein is 4-diphosphocytidyl-2-C-methyl-D-erythritol kinase.